Consider the following 454-residue polypeptide: Glutamine synthetase (454 aa).

The 93-residue stretch at N19–K111 folds into the GS beta-grasp domain. In terms of domain architecture, GS catalytic spans P118–Y454. 2 residues coordinate Mg(2+): E142 and E144. Position 194 (E194) interacts with ATP. The Mg(2+) site is built by E199 and E206. L-glutamate-binding positions include N250–G251 and G251. Mg(2+) is bound at residue H255. ATP is bound by residues H257 to S259 and S259. Residues R309, E315, and R327 each contribute to the L-glutamate site. R327, R332, and K339 together coordinate ATP. E344 provides a ligand contact to Mg(2+). Residue R346 coordinates L-glutamate.

This sequence belongs to the glutamine synthetase family. In terms of assembly, oligomer of 12 subunits arranged in the form of two hexagons. It depends on Mg(2+) as a cofactor.

It is found in the cytoplasm. The catalysed reaction is L-glutamate + NH4(+) + ATP = L-glutamine + ADP + phosphate + H(+). Its activity is regulated as follows. Feedback inhibited by glycine and alanine, and inhibited by low concentrations of methionine sulfoximine. In terms of biological role, probably involved in nitrogen metabolism via ammonium assimilation. Catalyzes the ATP-dependent biosynthesis of glutamine from glutamate and ammonia. Beta-glutamate is a much poorer substrate than alpha-glutamate. In Methanocaldococcus jannaschii (strain ATCC 43067 / DSM 2661 / JAL-1 / JCM 10045 / NBRC 100440) (Methanococcus jannaschii), this protein is Glutamine synthetase.